The chain runs to 1205 residues: U2 snRNP component prp10 (1205 aa).

Disordered regions lie at residues 39–58 (QKEAAKNSSTNGSVNIEGTQ), 122–175 (YADE…GRSY), and 202–254 (GTLK…RRSR). The segment covering 44-58 (KNSSTNGSVNIEGTQ) has biased composition (polar residues). Basic and acidic residues predominate over residues 130-153 (MQERQSKKQIQDRESDYQKQRYDR). HEAT repeat units lie at residues 393 to 429 (LRERKILRLLLKVKNGTPPMRKSALRQLTDQARDFGA), 431 to 473 (ALFN…PFTH), 475 to 505 (ILVVIEPLLIDEDYYARAEGREIISNLAKAS), 506 to 540 (GLAHMIATMRPDIDHVDEYVRNTTARAFSVVASAL), 541 to 578 (GVPALLPFLKAVCRSKKSWQARHTGVRIIQQIALLLGC), 582 to 619 (PHLKNLVDCIGHGLEDEQQKVRIMTALSLSALAEAATP), 665 to 702 (HFTRRIMKILLREFNSPDEEMKKIVLKVVSQCASTDGV), 745 to 782 (VGSRQIVERVVNNFKDESEPYRKMTAETVDKVIGSLGV), 828 to 865 (PYLPQIVSTILYRLNNKSANVREQAADLVSSITIVLKA), 912 to 949 (PPIRDLLPRLTPILRNRHEKVQENTIDLVGKIADRGSE), 954 to 991 (REWMRICFELIDMLKAHKKSIRRAAVNTFGYISKAIGP), 993 to 1024 (DVLATLLNNLKVQERQNRVCTTVAIAIVAETC), 1025 to 1061 (MPFTVVPALMADYRTPEMNVQNGVLKSLAFMFEYIGE), 1065 to 1102 (DYVYAITPLLADALMDRDAVHRQTAASVIKHLSLGCVG), 1107 to 1142 (DAMIHLLNILWPNILEESPHVINAVREGIDGIRNCI), and 1143 to 1179 (GVGPIMAYLVQGLFHPSRKVRNTYWTSYNSAYVQSAD).

Belongs to the SF3B1 family. As to quaternary structure, belongs to the 40S cdc5-associated complex (or cwf complex), a spliceosome sub-complex reminiscent of a late-stage spliceosome composed of the U2, U5 and U6 snRNAs and at least brr2, cdc5, cwf2/prp3, cwf3/syf1, cwf4/syf3, cwf5/ecm2, spp42/cwf6, cwf7/spf27, cwf8, cwf9, cwf10, cwf11, cwf12, prp45/cwf13, cwf14, cwf15, cwf16, cwf17, cwf18, cwf19, cwf20, cwf21, cwf22, cwf23, cwf24, cwf25, cwf26, cyp7/cwf27, cwf28, cwf29/ist3, lea1, msl1, prp5/cwf1, prp10, prp12/sap130, prp17, prp22, sap61, sap62, sap114, sap145, slu7, smb1, smd1, smd3, smf1, smg1 and syf2.

It localises to the nucleus. In terms of biological role, contacts pre-mRNA on both sides of the branch site early in spliceosome assembly. This is U2 snRNP component prp10 (prp10) from Schizosaccharomyces pombe (strain 972 / ATCC 24843) (Fission yeast).